The sequence spans 317 residues: Methionyl-tRNA formyltransferase (317 aa).

Position 110 to 113 (110 to 113 (SLLP)) interacts with (6S)-5,6,7,8-tetrahydrofolate.

It belongs to the Fmt family.

The catalysed reaction is L-methionyl-tRNA(fMet) + (6R)-10-formyltetrahydrofolate = N-formyl-L-methionyl-tRNA(fMet) + (6S)-5,6,7,8-tetrahydrofolate + H(+). Attaches a formyl group to the free amino group of methionyl-tRNA(fMet). The formyl group appears to play a dual role in the initiator identity of N-formylmethionyl-tRNA by promoting its recognition by IF2 and preventing the misappropriation of this tRNA by the elongation apparatus. This chain is Methionyl-tRNA formyltransferase, found in Bacillus subtilis (strain 168).